A 155-amino-acid polypeptide reads, in one-letter code: MKLQLVAVGTKMPDWVQTGFSEYLRRFPKDMPFELIEIPAGKRGKNADIKRILDKEGEMMLAAAGKNRIVTLDIPGRPWDTPQLARELERWKQDGRDVSLLIGGPEGLSDACKAAAEQSWSLSALTLPHPLVRVIVAESLYRAWSITTNHPYHRE.

S-adenosyl-L-methionine is bound by residues L72, G103, and 122–127 (LSALTL).

Belongs to the RNA methyltransferase RlmH family. As to quaternary structure, homodimer.

The protein localises to the cytoplasm. It catalyses the reaction pseudouridine(1915) in 23S rRNA + S-adenosyl-L-methionine = N(3)-methylpseudouridine(1915) in 23S rRNA + S-adenosyl-L-homocysteine + H(+). Specifically methylates the pseudouridine at position 1915 (m3Psi1915) in 23S rRNA. The chain is Ribosomal RNA large subunit methyltransferase H from Cronobacter sakazakii (strain ATCC BAA-894) (Enterobacter sakazakii).